An 894-amino-acid chain; its full sequence is Eukaryotic translation initiation factor 3 subunit C (894 aa).

Disordered regions lie at residues 1–28 (MSRF…KANK) and 162–235 (SDYR…VTKM). Acidic residues-rich tracts occupy residues 12–22 (SDTDSSEDEVE), 169–189 (DEDG…EEVP), and 203–214 (SESESDSDDDDS). Residues 215-224 (FNWSSEPDTN) show a composition bias toward polar residues. Residues 625–801 (YHMHINVELM…DCLIMHRVEP (177 aa)) enclose the PCI domain. The interval 824–894 (QILEPRTGRG…RRHPQKPRAF (71 aa)) is disordered. Positions 845-854 (RNERQGDKQK) are enriched in basic and acidic residues. Over residues 855–870 (GSGGFQGERRGGPGGP) the composition is skewed to gly residues. Residues 884-894 (QRRHPQKPRAF) are compositionally biased toward basic residues.

This sequence belongs to the eIF-3 subunit C family. As to quaternary structure, component of the eukaryotic translation initiation factor 3 (eIF-3) complex.

It localises to the cytoplasm. Its function is as follows. Component of the eukaryotic translation initiation factor 3 (eIF-3) complex, which is involved in protein synthesis of a specialized repertoire of mRNAs and, together with other initiation factors, stimulates binding of mRNA and methionyl-tRNAi to the 40S ribosome. The eIF-3 complex specifically targets and initiates translation of a subset of mRNAs involved in cell proliferation. The chain is Eukaryotic translation initiation factor 3 subunit C from Caenorhabditis briggsae.